The chain runs to 373 residues: Alcohol dehydrogenase 2 (373 aa).

Residues cysteine 47, threonine 49, histidine 69, cysteine 99, cysteine 102, cysteine 105, cysteine 113, and cysteine 177 each contribute to the Zn(2+) site. The an alcohol site is built by threonine 49 and histidine 69. Threonine 49 contacts NAD(+). NAD(+) contacts are provided by residues 202-207 (GLGAVG), aspartate 226, lysine 231, threonine 272, phenylalanine 316, and arginine 366.

The protein belongs to the zinc-containing alcohol dehydrogenase family. As to quaternary structure, homodimer. It depends on Zn(2+) as a cofactor.

It localises to the cytoplasm. The enzyme catalyses a primary alcohol + NAD(+) = an aldehyde + NADH + H(+). It catalyses the reaction a secondary alcohol + NAD(+) = a ketone + NADH + H(+). The protein is Alcohol dehydrogenase 2 (ADH2) of Hordeum vulgare (Barley).